A 416-amino-acid polypeptide reads, in one-letter code: Gamma-glutamyl phosphate reductase (416 aa).

This sequence belongs to the gamma-glutamyl phosphate reductase family.

Its subcellular location is the cytoplasm. It catalyses the reaction L-glutamate 5-semialdehyde + phosphate + NADP(+) = L-glutamyl 5-phosphate + NADPH + H(+). The protein operates within amino-acid biosynthesis; L-proline biosynthesis; L-glutamate 5-semialdehyde from L-glutamate: step 2/2. Catalyzes the NADPH-dependent reduction of L-glutamate 5-phosphate into L-glutamate 5-semialdehyde and phosphate. The product spontaneously undergoes cyclization to form 1-pyrroline-5-carboxylate. This is Gamma-glutamyl phosphate reductase from Streptococcus pyogenes serotype M4 (strain MGAS10750).